Reading from the N-terminus, the 801-residue chain is Heavy metal tolerance factor 1 (801 aa).

Over 1–24 (MGFSPFLDECRAEGLWPIGPSCNK) the chain is Lumenal. A helical transmembrane segment spans residues 25-45 (IISFGVYTFFIVVNFIVLCIP). Topologically, residues 46 to 75 (NSNSANNNYRRMTDDDASSTSKLTISKILS) are cytoplasmic. The helical transmembrane segment at 76–96 (ICTIFAVICQSIFYFCFTFYF) threads the bilayer. The Lumenal portion of the chain corresponds to 97–101 (HPYTH). Residues 102–122 (LLLAFCVSKLFFWILSLCSFS) form a helical membrane-spanning segment. At 123 to 129 (KWRNQPS) the chain is on the cytoplasmic side. A helical membrane pass occupies residues 130 to 150 (TPISLAFAFSAALLIHCIPLT). The Lumenal portion of the chain corresponds to 151–167 (DWKKYFEPTSKNRGDLT). The helical transmembrane segment at 168-188 (FYIIELALVTVVFFFTIVTGL) threads the bilayer. Residues 189-226 (FNFSGCSSRESAWNNLSKKVVTVAPYIWPTKSISLQLR) are Cytoplasmic-facing. The helical transmembrane segment at 227–247 (VVFCLFLLIIGRLINVSLPIL) threads the bilayer. Residues 227–516 (VVFCLFLLII…FGTIYRVIQK (290 aa)) enclose the ABC transmembrane type-1 domain. Over 248–264 (SKWIVDELATPDTFQYS) the chain is Lumenal. Residues 265-285 (LLFLATFLKFLQGNGAMGGFL) form a helical membrane-spanning segment. The Cytoplasmic portion of the chain corresponds to 286-341 (NTVRTYLWIPIQQYTTRELEVELFKHLHSLSLRWHLSRKTGQVLRVMDRGTSSVNN). The helical transmembrane segment at 342–364 (ILNYILFNVVPTIADIVIAVIFF) threads the bilayer. Residues 365-371 (FSAFNAY) lie on the Lumenal side of the membrane. Residues 372–390 (FGLIVFGTMALYLTVTISI) form a helical membrane-spanning segment. Over 391–461 (TEWRTQYIRE…SLAFLNCLQN (71 aa)) the chain is Cytoplasmic. Residues 462–482 (AIIGIGMIGGSVFVVYMIVHE) form a helical membrane-spanning segment. Topologically, residues 483–489 (KTLTVGD) are lumenal. A helical membrane pass occupies residues 490 to 510 (YVLFTTYLLQLYTPLNFFGTI). Over 511–801 (YRVIQKAFVD…KSIELGEELP (291 aa)) the chain is Cytoplasmic. The region spanning 550–784 (ISVKNLTFEY…QGTYASMWEA (235 aa)) is the ABC transporter domain. 583-590 (GSSGSGKS) serves as a coordination point for ATP.

Belongs to the ABC transporter superfamily. ABCB family. Heavy Metal importer (TC 3.A.1.210) subfamily. As to expression, expressed in coelomocytes, as well as in head and tail neurons, and in the intestinal cells.

Its subcellular location is the vacuole membrane. The protein localises to the early endosome. It is found in the late endosome. The protein resides in the recycling endosome. Functionally, may play a pivotal role in the detoxification of heavy metals such as cadmium but do not depend exclusively on phytochelatins (PC) synthesis. The sequence is that of Heavy metal tolerance factor 1 from Caenorhabditis elegans.